The primary structure comprises 299 residues: MATH domain and coiled-coil domain-containing protein At2g42460 (299 aa).

The MATH domain maps to 7–130; the sequence is QKTFTWKIEN…NNTLFIEVYI (124 aa). A coiled-coil region spans residues 225-262; sequence FRVKWLKSKLDEISLARKKKVDADAARVQELEGKVKNQ.

This chain is MATH domain and coiled-coil domain-containing protein At2g42460, found in Arabidopsis thaliana (Mouse-ear cress).